Here is a 207-residue protein sequence, read N- to C-terminus: Homeobox protein BarH-like 1 (207 aa).

Positions 95–154 (GRRSRTVFTELQLMGLEKRFEKQKYLSTPDRIDLAESLGLSQLQVKTWYQNRRMKWKKIV) form a DNA-binding region, homeobox. The tract at residues 157–207 (GGGLESPTKPKGRPKKNSIPSSEQLSEQERAKETEKPPESPGEPSERQQEE) is disordered. The segment covering 183-207 (EQERAKETEKPPESPGEPSERQQEE) has biased composition (basic and acidic residues).

The protein belongs to the BAR homeobox family. As to expression, expressed predominantly in the facial primordia, developing stomach, and proximal limbs.

The protein resides in the nucleus. Its function is as follows. Transcription factor, which is involved in craniofacial development, in odontogenic region definition, and in stomach organogenesis. Binds to a regulatory module of the NCAM promoter. This chain is Homeobox protein BarH-like 1 (BARX1), found in Gallus gallus (Chicken).